We begin with the raw amino-acid sequence, 75 residues long: MVIAMKKLDVTGDICPVPVLKTKKALEELNEGEELEVVGDYKPALENIKRFAENNGYTVVLAEETESRFRIVIKK.

The active-site Cysteine persulfide intermediate is the Cys15.

Belongs to the sulfur carrier protein TusA family.

This is Putative sulfur carrier protein MJ0990 from Methanocaldococcus jannaschii (strain ATCC 43067 / DSM 2661 / JAL-1 / JCM 10045 / NBRC 100440) (Methanococcus jannaschii).